Here is a 272-residue protein sequence, read N- to C-terminus: WIMGHMVNAIWQIDQFMDLGVNSIEFDINFDKSANPIYTYHGVPCDCFRSCLKWEYFGDFLTALRHRTTPGDKLYKEKLILFVFDMKTNSLYDNQAYTAGVNMANNIFKYYWNNGNNGGRSYFILSIPNLNHYNLIKGFQETIKSKGHPELLEKVGYDFSANDDIPDVEKAYQKVGVTGHVWQSDGITNCLPRTLTRVQAAVKERDSGGVINKVYYWTADKYSTTRDALDAGVDGIMTNYPYVLNDVLKENAYKNKFRLANYEDNPWVTFKP.

Histidine 5 is a catalytic residue. Mg(2+)-binding residues include glutamate 25 and aspartate 27. The active-site Nucleophile is the histidine 41. Intrachain disulfides connect cysteine 45/cysteine 51 and cysteine 47/cysteine 190. Aspartate 85 is a binding site for Mg(2+).

Belongs to the arthropod phospholipase D family. Class II subfamily. Mg(2+) is required as a cofactor. In terms of tissue distribution, expressed by the venom gland.

The protein localises to the secreted. It catalyses the reaction an N-(acyl)-sphingosylphosphocholine = an N-(acyl)-sphingosyl-1,3-cyclic phosphate + choline. The catalysed reaction is an N-(acyl)-sphingosylphosphoethanolamine = an N-(acyl)-sphingosyl-1,3-cyclic phosphate + ethanolamine. It carries out the reaction a 1-acyl-sn-glycero-3-phosphocholine = a 1-acyl-sn-glycero-2,3-cyclic phosphate + choline. The enzyme catalyses a 1-acyl-sn-glycero-3-phosphoethanolamine = a 1-acyl-sn-glycero-2,3-cyclic phosphate + ethanolamine. Functionally, dermonecrotic toxins cleave the phosphodiester linkage between the phosphate and headgroup of certain phospholipids (sphingolipid and lysolipid substrates), forming an alcohol (often choline) and a cyclic phosphate. This toxin acts on sphingomyelin (SM). It may also act on ceramide phosphoethanolamine (CPE), lysophosphatidylcholine (LPC) and lysophosphatidylethanolamine (LPE), but not on lysophosphatidylserine (LPS), and lysophosphatidylglycerol (LPG). It acts by transphosphatidylation, releasing exclusively cyclic phosphate products as second products. Induces dermonecrosis, hemolysis, increased vascular permeability, edema, inflammatory response, and platelet aggregation. This is Dermonecrotic toxin LspaSicTox-alphaII1 from Loxosceles spadicea (Recluse spider).